Reading from the N-terminus, the 629-residue chain is DNA topoisomerase 4 subunit B (629 aa).

ATP is bound by residues Tyr-4, Asn-41, Asp-68, 109 to 115 (GLHGVGI), and Lys-333. The 114-residue stretch at 411–524 (AELFLVEGDS…AGHVYVAMPP (114 aa)) folds into the Toprim domain. Positions 417, 489, and 491 each coordinate Mg(2+).

Belongs to the type II topoisomerase family. ParE type 1 subfamily. In terms of assembly, heterotetramer composed of ParC and ParE. It depends on Mg(2+) as a cofactor. Mn(2+) is required as a cofactor. The cofactor is Ca(2+).

The enzyme catalyses ATP-dependent breakage, passage and rejoining of double-stranded DNA.. Its function is as follows. Topoisomerase IV is essential for chromosome segregation. It relaxes supercoiled DNA. Performs the decatenation events required during the replication of a circular DNA molecule. The sequence is that of DNA topoisomerase 4 subunit B from Pseudomonas aeruginosa (strain ATCC 15692 / DSM 22644 / CIP 104116 / JCM 14847 / LMG 12228 / 1C / PRS 101 / PAO1).